Consider the following 186-residue polypeptide: Elongation factor P (186 aa).

This sequence belongs to the elongation factor P family.

The protein resides in the cytoplasm. The protein operates within protein biosynthesis; polypeptide chain elongation. In terms of biological role, involved in peptide bond synthesis. Stimulates efficient translation and peptide-bond synthesis on native or reconstituted 70S ribosomes in vitro. Probably functions indirectly by altering the affinity of the ribosome for aminoacyl-tRNA, thus increasing their reactivity as acceptors for peptidyl transferase. This Polynucleobacter asymbioticus (strain DSM 18221 / CIP 109841 / QLW-P1DMWA-1) (Polynucleobacter necessarius subsp. asymbioticus) protein is Elongation factor P.